The sequence spans 103 residues: UPF0122 protein FN1394 (103 aa).

Belongs to the UPF0122 family.

In terms of biological role, might take part in the signal recognition particle (SRP) pathway. This is inferred from the conservation of its genetic proximity to ftsY/ffh. May be a regulatory protein. This is UPF0122 protein FN1394 from Fusobacterium nucleatum subsp. nucleatum (strain ATCC 25586 / DSM 15643 / BCRC 10681 / CIP 101130 / JCM 8532 / KCTC 2640 / LMG 13131 / VPI 4355).